The following is a 432-amino-acid chain: Casein kinase II subunit alpha-4, chloroplastic (432 aa).

Residues 1-55 (MALRPCTGFTISSLRNASAANNNLFSLLSFSSSSPAKRNLLLSSLQDNLRRFASS) constitute a chloroplast transit peptide. Residues 63–83 (LRNQQQQHQQQQQSRVKEKSE) form a disordered region. Positions 66–75 (QQQQHQQQQQ) are enriched in low complexity. One can recognise a Protein kinase domain in the interval 132 to 417 (YEVVRKVGRG…AKEAMAHPYF (286 aa)). Residues 138–146 (VGRGKYSEV) and K161 each bind ATP. The active-site Proton acceptor is the D249.

The protein belongs to the protein kinase superfamily. Ser/Thr protein kinase family. CK2 subfamily. Tetramer of two alpha and two beta chains. As to expression, expressed in root tips, lateral root primordia, cotyledons, leaf primordia, sepals, filaments, stigma, and anthers.

The protein localises to the plastid. The protein resides in the chloroplast. The enzyme catalyses L-seryl-[protein] + ATP = O-phospho-L-seryl-[protein] + ADP + H(+). It catalyses the reaction L-threonyl-[protein] + ATP = O-phospho-L-threonyl-[protein] + ADP + H(+). Functionally, casein kinases are operationally defined by their preferential utilization of acidic proteins such as caseins as substrates. The alpha chain contains the catalytic site. Involved in the regulation of various developmental processes. Involved in the regulation of plant growth and flowering time. Involved in retrograde signaling in plant responses to abscisic acid (ABA) and heat stress. May act as an enhancing factor in abiotic stress signaling through modulation of the expression of some molecular players in retrograde signaling. Phosphorylates RuBisCo activase (RCA) at Thr-78. The polypeptide is Casein kinase II subunit alpha-4, chloroplastic (Arabidopsis thaliana (Mouse-ear cress)).